Reading from the N-terminus, the 397-residue chain is Elongation factor Tu (397 aa).

The tr-type G domain occupies 10–207 (KPHCNIGTIG…AVDEWIPQPE (198 aa)). The segment at 19–26 (GHVDHGKT) is G1. 19-26 (GHVDHGKT) provides a ligand contact to GTP. Threonine 26 contacts Mg(2+). Residues 61–65 (GITIS) form a G2 region. A G3 region spans residues 82 to 85 (DCPG). Residues 82–86 (DCPGH) and 137–140 (NKVD) contribute to the GTP site. A G4 region spans residues 137-140 (NKVD). Residues 175–177 (SAL) are G5.

The protein belongs to the TRAFAC class translation factor GTPase superfamily. Classic translation factor GTPase family. EF-Tu/EF-1A subfamily. In terms of assembly, monomer.

It is found in the cytoplasm. The catalysed reaction is GTP + H2O = GDP + phosphate + H(+). GTP hydrolase that promotes the GTP-dependent binding of aminoacyl-tRNA to the A-site of ribosomes during protein biosynthesis. The chain is Elongation factor Tu from Sphingopyxis alaskensis (strain DSM 13593 / LMG 18877 / RB2256) (Sphingomonas alaskensis).